A 2896-amino-acid chain; its full sequence is 3'-5' exoribonuclease HELZ2 (2896 aa).

C3H1-type zinc fingers lie at residues 90-114 (VCHYYSPGLGCRRHRNRCTFARSRE) and 217-246 (GQPPAYCRFVGRGQPCWRGESRCQFAHSAV). The segment at 287-311 (LYCPACLVTCHSQEAFENHCASSEH) adopts a C2H2-type; atypical zinc-finger fold. The C3H1-type 3 zinc-finger motif lies at 327-357 (SPPPGLSKFELCPKPDLCEYGDACTKAHSAQ). The region spanning 770–1126 (VALIAGWGPG…VVLSTVHTCQ (357 aa)) is the UvrD-like helicase ATP-binding domain. ATP is bound at residue 791 to 798 (GPFGTGKT). The interval 810–1306 (RRPETKVLIC…ESTEAEDAEA (497 aa)) is interaction with THRAP3. The DEAA box motif lies at 914 to 917 (DEAA). S1253 bears the Phosphoserine mark. Short sequence motifs (LXXLL motif) lie at residues 1322–1326 (LRELL), 1365–1369 (LRKLL), and 1420–1424 (LVQLL). One can recognise an RNB domain in the interval 1581–1938 (REDCRAFLTF…VLQRQILLAL (358 aa)). The LXXLL motif 4 motif lies at 2259–2263 (LEGLP). The segment at 2382–2896 (PSRFLERQTY…RVCRRPTMPS (515 aa)) is interaction with THRAP3. The UvrD-like helicase ATP-binding 2 domain maps to 2400 to 2675 (LNPSQNVAVR…HMLDTQYRMH (276 aa)). 2421–2428 (GPPGTGKT) provides a ligand contact to ATP. Residues 2476–2480 (LAGLL) carry the LXXLL motif 5 motif.

It belongs to the DNA2/NAM7 helicase family. In terms of assembly, interacts with PPARA (via DNA-binding domain) and PPARG; the interaction stimulates the transcriptional activity of PPARA and PPARG. Interacts with THRAP3; the interaction is direct and HELZ2 and THRAP3 synergistically enhance the transcriptional activity of PPARG. It is probably part of the peroxisome proliferator activated receptor alpha interacting complex (PRIC). Expressed in various tissues including heart, pancreas, skeletal muscle, colon, spleen, liver, kidney, lung, peripheral blood and placenta.

It is found in the cytoplasm. The catalysed reaction is Exonucleolytic cleavage in the 3'- to 5'-direction to yield nucleoside 5'-phosphates.. The enzyme catalyses ATP + H2O = ADP + phosphate + H(+). Functionally, can degrade highly structured RNAs through its concerted ATP-dependent RNA helicase and 3' to 5' exoribonuclease activities. Shows a strong preference for pyrimidine over purine residues for its nuclease activity. Acts as a transcriptional coactivator for a number of nuclear receptors including PPARA, PPARG, THRA, THRB and RXRA. This chain is 3'-5' exoribonuclease HELZ2, found in Homo sapiens (Human).